The following is a 773-amino-acid chain: Photosystem I P700 chlorophyll a apoprotein A1 (773 aa).

The disordered stretch occupies residues 1 to 27; it reads MTISPPERGEKAKGAAPTPYDQPVDRD. Helical transmembrane passes span 80 to 103, 166 to 189, 205 to 229, 315 to 333, 375 to 398, 414 to 440, 462 to 484, and 564 to 582; these read IFSAHFGHLAVVFIWMSAAFFHGA, LMALAIGGVIMAALMLHGGIYHYH, LQHHQIALIGLGSIAWAGHLIHIGA, ISHHHLAFGVFAIFGGHMW, WHGQLSINLAMVGSASIVVAHHMY, LGLFTHHMWIGGLFICGAAAHAGIAMI, AIISHLNWVCMWLGFHSFGLYIH, and LMIHHVHAFTIHVTLLILL. [4Fe-4S] cluster is bound by residues Cys606 and Cys615. 2 helical membrane passes run 622–643 and 687–709; these read HVFLGLFWMYNSLSVVIFHFSW and ISMYGLMFLGAHFVWAFSLMFLF. His698 contacts divinylchlorophyll a'. Positions 706 and 714 each coordinate divinyl chlorophyll a. Position 715 (Trp715) interacts with phylloquinone. The chain crosses the membrane as a helical span at residues 747 to 767; that stretch reads AVGVAHFLLGGIATTWAFFHA.

It belongs to the PsaA/PsaB family. In terms of assembly, the PsaA/B heterodimer binds the P700 divinyl chlorophyll special pair and subsequent electron acceptors. PSI consists of a core antenna complex that captures photons, and an electron transfer chain that converts photonic excitation into a charge separation. The cyanobacterial PSI reaction center is composed of one copy each of PsaA,B,C,D,E,F,I,J,K,L,M and X, and forms trimeric complexes. PSI electron transfer chain: 5 divinyl chlorophyll a, 1 divinyl chlorophyll a', 2 phylloquinones and 3 4Fe-4S clusters. PSI core antenna: 90 divinyl chlorophyll a, 22 carotenoids, 3 phospholipids and 1 galactolipid. P700 is a divinyl chlorophyll a/divinyl chlorophyll a' dimer, A0 is one or more divinylchlorophyll a, A1 is one or both phylloquinones and FX is a shared 4Fe-4S iron-sulfur center. is required as a cofactor.

It localises to the cellular thylakoid membrane. It carries out the reaction reduced [plastocyanin] + hnu + oxidized [2Fe-2S]-[ferredoxin] = oxidized [plastocyanin] + reduced [2Fe-2S]-[ferredoxin]. In terms of biological role, psaA and PsaB bind P700, the primary electron donor of photosystem I (PSI), as well as the electron acceptors A0, A1 and FX. PSI is a plastocyanin/cytochrome c6-ferredoxin oxidoreductase, converting photonic excitation into a charge separation, which transfers an electron from the donor P700 chlorophyll pair to the spectroscopically characterized acceptors A0, A1, FX, FA and FB in turn. Oxidized P700 is reduced on the lumenal side of the thylakoid membrane by plastocyanin or cytochrome c6. The polypeptide is Photosystem I P700 chlorophyll a apoprotein A1 (Prochlorococcus marinus (strain SARG / CCMP1375 / SS120)).